A 243-amino-acid polypeptide reads, in one-letter code: DNA repair protein RecO (243 aa).

The protein belongs to the RecO family.

In terms of biological role, involved in DNA repair and RecF pathway recombination. This chain is DNA repair protein RecO, found in Vibrio parahaemolyticus serotype O3:K6 (strain RIMD 2210633).